Consider the following 306-residue polypeptide: uncharacterized protein (306 aa).

10 helical membrane passes run 6–26, 35–55, 69–89, 98–118, 122–142, 154–174, 186–206, 211–231, 247–267, and 281–301; these read LLGF…PIAL, AQTI…ALLA, YAWI…LFSS, VAQI…VLIF, LGLH…LFFN, YSTG…YGMA, QILL…ADFS, LTPL…IGYG, VVIT…HYFS, and YIGA…HKLL. 2 EamA domains span residues 17–142 and 166–296; these read MAWG…LFFN and LIWV…LSAI.

This sequence belongs to the EamA transporter family.

The protein resides in the cell membrane. This is an uncharacterized protein from Haemophilus influenzae (strain ATCC 51907 / DSM 11121 / KW20 / Rd).